The chain runs to 385 residues: Probable protein phosphatase 2C 79 (385 aa).

An N-terminal signal peptide occupies residues Met1–Ser18. One can recognise a PPM-type phosphatase domain in the interval Asp47–Leu356. Phosphoserine is present on Ser76. Residues Asp87, Gly88, Asp288, and Asp347 each coordinate Mn(2+).

Belongs to the PP2C family. Mg(2+) serves as cofactor. Mn(2+) is required as a cofactor.

It carries out the reaction O-phospho-L-seryl-[protein] + H2O = L-seryl-[protein] + phosphate. It catalyses the reaction O-phospho-L-threonyl-[protein] + H2O = L-threonyl-[protein] + phosphate. May dephosphorylate and repress plasma membrane H(+)-ATPases (PM H(+)-ATPases, e.g. AHA1 and AHA2), thus influencing negatively plant growth and fitness. The chain is Probable protein phosphatase 2C 79 from Arabidopsis thaliana (Mouse-ear cress).